Reading from the N-terminus, the 384-residue chain is 8-amino-7-oxononanoate synthase (384 aa).

Residue R23 participates in substrate binding. Residue 110-111 coordinates pyridoxal 5'-phosphate; that stretch reads GF. H135 is a substrate binding site. Pyridoxal 5'-phosphate-binding residues include S179, H206, and T232. K235 carries the post-translational modification N6-(pyridoxal phosphate)lysine. T348 contacts substrate.

It belongs to the class-II pyridoxal-phosphate-dependent aminotransferase family. BioF subfamily. In terms of assembly, homodimer. Pyridoxal 5'-phosphate is required as a cofactor.

The enzyme catalyses 6-carboxyhexanoyl-[ACP] + L-alanine + H(+) = (8S)-8-amino-7-oxononanoate + holo-[ACP] + CO2. It functions in the pathway cofactor biosynthesis; biotin biosynthesis. Its function is as follows. Catalyzes the decarboxylative condensation of pimeloyl-[acyl-carrier protein] and L-alanine to produce 8-amino-7-oxononanoate (AON), [acyl-carrier protein], and carbon dioxide. This chain is 8-amino-7-oxononanoate synthase, found in Vibrio cholerae serotype O1 (strain ATCC 39315 / El Tor Inaba N16961).